Consider the following 269-residue polypeptide: 1,6-dihydroxycyclohexa-2,4-diene-1-carboxylate dehydrogenase (269 aa).

An NAD(+)-binding site is contributed by 11–35; the sequence is VITGAAQGIGRRVAERMAAEGGRLL. Residue serine 142 coordinates substrate. Tyrosine 153 functions as the Proton acceptor in the catalytic mechanism.

It belongs to the short-chain dehydrogenases/reductases (SDR) family. In terms of assembly, homodimer.

It carries out the reaction (1R,6S)-1,6-dihydroxycyclohexa-2,4-diene-1-carboxylate + NAD(+) = catechol + CO2 + NADH. It participates in aromatic compound metabolism; benzoate degradation via hydroxylation; catechol from benzoate: step 2/2. In terms of biological role, degradation of 2-hydro-1,2-dihydroxy benzoate (DHB) to catechol. This is 1,6-dihydroxycyclohexa-2,4-diene-1-carboxylate dehydrogenase (xylL) from Pseudomonas putida (Arthrobacter siderocapsulatus).